The sequence spans 110 residues: Protein NATD1 (110 aa).

The N-acetyltransferase domain occupies glutamate 19 to glutamine 109.

Belongs to the NATD1 family. Expressed in the heart, testis, kidney and lung.

This Mus musculus (Mouse) protein is Protein NATD1 (Natd1).